We begin with the raw amino-acid sequence, 248 residues long: Meiotically up-regulated gene 65 protein (248 aa).

Has a role in meiosis. The chain is Meiotically up-regulated gene 65 protein (mug65) from Schizosaccharomyces pombe (strain 972 / ATCC 24843) (Fission yeast).